A 210-amino-acid polypeptide reads, in one-letter code: Holliday junction resolvase RecU (210 aa).

Mg(2+) is bound by residues T93, D95, E108, and Q127.

The protein belongs to the RecU family. It depends on Mg(2+) as a cofactor.

It localises to the cytoplasm. The enzyme catalyses Endonucleolytic cleavage at a junction such as a reciprocal single-stranded crossover between two homologous DNA duplexes (Holliday junction).. Its function is as follows. Endonuclease that resolves Holliday junction intermediates in genetic recombination. Cleaves mobile four-strand junctions by introducing symmetrical nicks in paired strands. Promotes annealing of linear ssDNA with homologous dsDNA. Required for DNA repair, homologous recombination and chromosome segregation. The protein is Holliday junction resolvase RecU of Lactobacillus helveticus (strain DPC 4571).